Reading from the N-terminus, the 362-residue chain is Probable dual-specificity RNA methyltransferase RlmN (362 aa).

Glutamate 105 (proton acceptor) is an active-site residue. One can recognise a Radical SAM core domain in the interval histidine 111–aspartate 344. Residues cysteine 118 and cysteine 349 are joined by a disulfide bond. [4Fe-4S] cluster is bound by residues cysteine 125, cysteine 129, and cysteine 132. Residues glycine 175–glutamate 176, serine 207, serine 230–histidine 232, and asparagine 306 contribute to the S-adenosyl-L-methionine site. Catalysis depends on cysteine 349, which acts as the S-methylcysteine intermediate.

It belongs to the radical SAM superfamily. RlmN family. [4Fe-4S] cluster is required as a cofactor.

Its subcellular location is the cytoplasm. The enzyme catalyses adenosine(2503) in 23S rRNA + 2 reduced [2Fe-2S]-[ferredoxin] + 2 S-adenosyl-L-methionine = 2-methyladenosine(2503) in 23S rRNA + 5'-deoxyadenosine + L-methionine + 2 oxidized [2Fe-2S]-[ferredoxin] + S-adenosyl-L-homocysteine. It catalyses the reaction adenosine(37) in tRNA + 2 reduced [2Fe-2S]-[ferredoxin] + 2 S-adenosyl-L-methionine = 2-methyladenosine(37) in tRNA + 5'-deoxyadenosine + L-methionine + 2 oxidized [2Fe-2S]-[ferredoxin] + S-adenosyl-L-homocysteine. In terms of biological role, specifically methylates position 2 of adenine 2503 in 23S rRNA and position 2 of adenine 37 in tRNAs. This is Probable dual-specificity RNA methyltransferase RlmN from Bacillus thuringiensis subsp. konkukian (strain 97-27).